Reading from the N-terminus, the 757-residue chain is Glutathione biosynthesis bifunctional protein GshAB (757 aa).

The tract at residues 1 to 337 (MKIQHIIHEN…LGKARLAEVA (337 aa)) is glutamate--cysteine ligase. The region spanning 494–753 (KKVLQKAGFN…LTQNVIKMLF (260 aa)) is the ATP-grasp domain. Position 521-580 (521-580 (ALFENRAVVIKPKSTNYGLGITIFQQGVQNREDFAKALEIAFREDKEVMVEDYLVGTEYR)) interacts with ATP. The Mg(2+) site is built by Asp-702, Glu-723, and Asn-725. Mn(2+)-binding residues include Asp-702, Glu-723, and Asn-725.

This sequence in the N-terminal section; belongs to the glutamate--cysteine ligase type 1 family. Type 2 subfamily. As to quaternary structure, monomer. It depends on Mg(2+) as a cofactor. Requires Mn(2+) as cofactor.

The enzyme catalyses L-cysteine + L-glutamate + ATP = gamma-L-glutamyl-L-cysteine + ADP + phosphate + H(+). It carries out the reaction gamma-L-glutamyl-L-cysteine + glycine + ATP = glutathione + ADP + phosphate + H(+). It participates in sulfur metabolism; glutathione biosynthesis; glutathione from L-cysteine and L-glutamate: step 1/2. It functions in the pathway sulfur metabolism; glutathione biosynthesis; glutathione from L-cysteine and L-glutamate: step 2/2. Its function is as follows. Synthesizes glutathione from L-glutamate and L-cysteine via gamma-L-glutamyl-L-cysteine. In Pasteurella multocida (strain Pm70), this protein is Glutathione biosynthesis bifunctional protein GshAB.